We begin with the raw amino-acid sequence, 106 residues long: Cytochrome c3 (106 aa).

Heme c contacts are provided by His26, His29, Cys34, Cys37, His38, His39, Cys50, Cys55, His56, His75, Cys82, Cys85, His86, Cys98, Cys101, and His102.

Post-translationally, binds 4 heme c groups per subunit.

Functionally, participates in sulfate respiration coupled with phosphorylation by transferring electrons from the enzyme dehydrogenase to ferredoxin. This Maridesulfovibrio salexigens (Desulfovibrio salexigens) protein is Cytochrome c3.